The sequence spans 161 residues: Phosphopantetheine adenylyltransferase (161 aa).

Serine 11 is a binding site for substrate. ATP contacts are provided by residues serine 11–phenylalanine 12 and histidine 19. Substrate-binding residues include lysine 43, leucine 75, and arginine 89. Residues glycine 90 to arginine 92, glutamate 100, and tyrosine 125 to serine 131 contribute to the ATP site.

This sequence belongs to the bacterial CoaD family. Homohexamer. The cofactor is Mg(2+).

It localises to the cytoplasm. It catalyses the reaction (R)-4'-phosphopantetheine + ATP + H(+) = 3'-dephospho-CoA + diphosphate. It functions in the pathway cofactor biosynthesis; coenzyme A biosynthesis; CoA from (R)-pantothenate: step 4/5. In terms of biological role, reversibly transfers an adenylyl group from ATP to 4'-phosphopantetheine, yielding dephospho-CoA (dPCoA) and pyrophosphate. The polypeptide is Phosphopantetheine adenylyltransferase (Staphylococcus saprophyticus subsp. saprophyticus (strain ATCC 15305 / DSM 20229 / NCIMB 8711 / NCTC 7292 / S-41)).